Consider the following 295-residue polypeptide: Small ribosomal subunit protein uS2 (295 aa).

The protein belongs to the universal ribosomal protein uS2 family. Component of the small ribosomal subunit. Mature ribosomes consist of a small (40S) and a large (60S) subunit. The 40S subunit contains about 33 different proteins and 1 molecule of RNA (18S). The 60S subunit contains about 49 different proteins and 3 molecules of RNA (25S, 5.8S and 5S). Interacts with RPS21.

The protein localises to the cytoplasm. Functionally, required for the assembly and/or stability of the 40S ribosomal subunit. Required for the processing of the 20S rRNA-precursor to mature 18S rRNA in a late step of the maturation of 40S ribosomal subunits. The chain is Small ribosomal subunit protein uS2 from Paracoccidioides brasiliensis (strain Pb03).